The following is a 317-amino-acid chain: Ribosomal protein L11 methyltransferase (317 aa).

Thr158, Gly179, Asp201, and Asn244 together coordinate S-adenosyl-L-methionine.

The protein belongs to the methyltransferase superfamily. PrmA family.

The protein localises to the cytoplasm. The enzyme catalyses L-lysyl-[protein] + 3 S-adenosyl-L-methionine = N(6),N(6),N(6)-trimethyl-L-lysyl-[protein] + 3 S-adenosyl-L-homocysteine + 3 H(+). Functionally, methylates ribosomal protein L11. This is Ribosomal protein L11 methyltransferase from Streptococcus agalactiae serotype Ia (strain ATCC 27591 / A909 / CDC SS700).